A 346-amino-acid chain; its full sequence is NADH-ubiquinone oxidoreductase chain 2 (346 aa).

10 helical membrane-spanning segments follow: residues 25-45 (HWVL…PLIS), 60-80 (FLTQ…NAWA), 95-115 (CLLL…HFWF), 124-144 (LMTA…LLLM), 149-169 (LNPA…GWMG), 178-195 (ILAF…IILV), 200-219 (LALL…FMAL), 247-267 (VLLS…WLII), 274-294 (EMTP…FFYL), and 326-346 (AILA…HAIV).

It belongs to the complex I subunit 2 family.

The protein resides in the mitochondrion inner membrane. It catalyses the reaction a ubiquinone + NADH + 5 H(+)(in) = a ubiquinol + NAD(+) + 4 H(+)(out). Functionally, core subunit of the mitochondrial membrane respiratory chain NADH dehydrogenase (Complex I) that is believed to belong to the minimal assembly required for catalysis. Complex I functions in the transfer of electrons from NADH to the respiratory chain. The immediate electron acceptor for the enzyme is believed to be ubiquinone. This Anas capensis (Cape teal) protein is NADH-ubiquinone oxidoreductase chain 2 (MT-ND2).